The sequence spans 204 residues: Flavin-dependent thymidylate synthase (204 aa).

Residues 1-204 (MTVTLMQHTS…RYLFCLNQEG (204 aa)) enclose the ThyX domain. Residues serine 50 and 74 to 76 (RHR) contribute to the FAD site. DUMP contacts are provided by residues 71 to 74 (ELAR), 84 to 86 (SSR), and lysine 143. The ThyX motif signature appears at 74–84 (RHRIASLSVKS). FAD is bound by residues 159–161 (NAR) and asparagine 165. Arginine 170 contacts dUMP. Arginine 170 acts as the Involved in ionization of N3 of dUMP, leading to its activation in catalysis.

The protein belongs to the thymidylate synthase ThyX family. Homotetramer. The cofactor is FAD.

It carries out the reaction dUMP + (6R)-5,10-methylene-5,6,7,8-tetrahydrofolate + NADPH + H(+) = dTMP + (6S)-5,6,7,8-tetrahydrofolate + NADP(+). Its pathway is pyrimidine metabolism; dTTP biosynthesis. In terms of biological role, catalyzes the reductive methylation of 2'-deoxyuridine-5'-monophosphate (dUMP) to 2'-deoxythymidine-5'-monophosphate (dTMP) while utilizing 5,10-methylenetetrahydrofolate (mTHF) as the methyl donor, and NADPH and FADH(2) as the reductant. This Wolinella succinogenes (strain ATCC 29543 / DSM 1740 / CCUG 13145 / JCM 31913 / LMG 7466 / NCTC 11488 / FDC 602W) (Vibrio succinogenes) protein is Flavin-dependent thymidylate synthase.